The sequence spans 198 residues: Glycerol-3-phosphate acyltransferase (198 aa).

A run of 3 helical transmembrane segments spans residues Ala5 to Ile25, Val114 to Leu134, and Ala154 to Val176.

The protein belongs to the PlsY family. In terms of assembly, probably interacts with PlsX.

It is found in the cell membrane. The enzyme catalyses an acyl phosphate + sn-glycerol 3-phosphate = a 1-acyl-sn-glycero-3-phosphate + phosphate. It participates in lipid metabolism; phospholipid metabolism. In terms of biological role, catalyzes the transfer of an acyl group from acyl-phosphate (acyl-PO(4)) to glycerol-3-phosphate (G3P) to form lysophosphatidic acid (LPA). This enzyme utilizes acyl-phosphate as fatty acyl donor, but not acyl-CoA or acyl-ACP. This is Glycerol-3-phosphate acyltransferase from Desulforudis audaxviator (strain MP104C).